The following is a 483-amino-acid chain: Auxin transporter-like protein 2 (483 aa).

Over 1 to 53 the chain is Cytoplasmic; that stretch reads MENGEKAAETVVVGNYVEMEKDGKALDIKSKLSDMFWHGGSAYDAWFSCASNQ. The helical transmembrane segment at 54-71 threads the bilayer; it reads VAQVLLTLPYSFSQLGML. The Extracellular portion of the chain corresponds to 72–73; sequence SG. A helical transmembrane segment spans residues 74-94; the sequence is ILFQLFYGILGSWTAYLISIL. Residues 95–130 lie on the Cytoplasmic side of the membrane; that stretch reads YVEYRTRKEREKVNFRNHVIQWFEVLDGLLGKHWRN. A helical membrane pass occupies residues 131 to 151; sequence VGLAFNCTFLLFGSVIQLIAC. Residues 152–166 lie on the Extracellular side of the membrane; sequence ASNIYYINDNLDKRT. A helical transmembrane segment spans residues 167 to 187; it reads WTYIFGACCATTVFIPSFHNY. At 188-190 the chain is on the cytoplasmic side; the sequence is RIW. Residues 191–211 form a helical membrane-spanning segment; sequence SFLGLLMTTYTAWYLTIASIL. Over 212–226 the chain is Extracellular; that stretch reads HGQVEGVKHSGPSKL. The chain crosses the membrane as a helical span at residues 227–247; it reads VLYFTGATNILYTFGGHAVTV. At 248 to 261 the chain is on the cytoplasmic side; it reads EIMHAMWKPQKFKS. The chain crosses the membrane as a helical span at residues 262 to 282; the sequence is IYLFATLYVLTLTLPSASAVY. Residues 283–306 are Extracellular-facing; it reads WAFGDLLLNHSNAFALLPKNLYRD. Asn-291 carries an N-linked (GlcNAc...) asparagine glycan. A helical membrane pass occupies residues 307–327; it reads FAVVLMLIHQFITFGFACTPL. Topologically, residues 328-350 are cytoplasmic; it reads YFVWEKLIGMHECRSMCKRAAAR. Residues 351–371 traverse the membrane as a helical segment; that stretch reads LPVVIPIWFLAIIFPFFGPIN. Topologically, residues 372 to 374 are extracellular; sequence STV. Residues 375–395 form a helical membrane-spanning segment; the sequence is GSLLVSFTVYIIPALAHIFTF. The Cytoplasmic segment spans residues 396-422; that stretch reads RSSAARENAVEQPPRFLGRWTGAFTIN. A helical membrane pass occupies residues 423-443; that stretch reads AFIVVWVFIVGFGFGGWASMI. Residues 444–483 lie on the Extracellular side of the membrane; sequence NFVHQIDTFGLFTKCYQCPPPVMVSPPPISHPHFNHTHGL. An N-linked (GlcNAc...) asparagine glycan is attached at Asn-478.

Belongs to the amino acid/polyamine transporter 2 family. Amino acid/auxin permease (AAAP) (TC 2.A.18.1) subfamily.

The protein resides in the cell membrane. Its function is as follows. Carrier protein involved in proton-driven auxin influx. Mediates the formation of auxin gradient from developing leaves (site of auxin biosynthesis) to tips by contributing to the loading of auxin in vascular tissues and facilitating acropetal (base to tip) auxin transport within inner tissues of the root apex, and basipetal (tip to base) auxin transport within outer tissues of the root apex. This Arabidopsis thaliana (Mouse-ear cress) protein is Auxin transporter-like protein 2 (LAX2).